Consider the following 249-residue polypeptide: tRNA pseudouridine synthase A (249 aa).

D53 (nucleophile) is an active-site residue. A substrate-binding site is contributed by Y111.

The protein belongs to the tRNA pseudouridine synthase TruA family. As to quaternary structure, homodimer.

The enzyme catalyses uridine(38/39/40) in tRNA = pseudouridine(38/39/40) in tRNA. Its function is as follows. Formation of pseudouridine at positions 38, 39 and 40 in the anticodon stem and loop of transfer RNAs. This chain is tRNA pseudouridine synthase A, found in Streptococcus pneumoniae serotype 19F (strain G54).